A 63-amino-acid polypeptide reads, in one-letter code: Jingdongin-1-MT1 (63 aa).

An N-terminal signal peptide occupies residues 1–22; it reads MFTLKKSLLLLFFLGTINLSLC. A propeptide spans 23–44 (removed in mature form); the sequence is EQERDADEEERRDDDEMDVEVE. Residues Cys-57 and Cys-63 are joined by a disulfide bond.

The protein belongs to the frog skin active peptide (FSAP) family. Brevinin subfamily. As to expression, expressed by the skin glands.

Its subcellular location is the secreted. Its function is as follows. Antimicrobial peptide. Active against some Gram-negative and a variety of Gram-positive bacterial strains. Active against fungus C.glabrata 090902 but not against C.neoformans 201211. Shows hemolytic activity against human erythrocytes. The protein is Jingdongin-1-MT1 of Amolops mantzorum (Sichuan torrent frog).